We begin with the raw amino-acid sequence, 421 residues long: 4-hydroxy-3-methylbut-2-en-1-yl diphosphate synthase (flavodoxin) (421 aa).

[4Fe-4S] cluster is bound by residues C311, C314, C357, and E364.

This sequence belongs to the IspG family. It depends on [4Fe-4S] cluster as a cofactor.

It catalyses the reaction (2E)-4-hydroxy-3-methylbut-2-enyl diphosphate + oxidized [flavodoxin] + H2O + 2 H(+) = 2-C-methyl-D-erythritol 2,4-cyclic diphosphate + reduced [flavodoxin]. Its pathway is isoprenoid biosynthesis; isopentenyl diphosphate biosynthesis via DXP pathway; isopentenyl diphosphate from 1-deoxy-D-xylulose 5-phosphate: step 5/6. Functionally, converts 2C-methyl-D-erythritol 2,4-cyclodiphosphate (ME-2,4cPP) into 1-hydroxy-2-methyl-2-(E)-butenyl 4-diphosphate. In Xanthomonas axonopodis pv. citri (strain 306), this protein is 4-hydroxy-3-methylbut-2-en-1-yl diphosphate synthase (flavodoxin).